The primary structure comprises 297 residues: MPLSGTPAPNKKRKSSKLIMELTGGGQESSGLNLGKKISVPRDVMLEELSLLTNRGSKMFKLRQLRVEKFIYENHPDVFSDSSMDRFQKFIPTVGGQLGTAGQGFSYSKSSGGGQAGRSGSAGQYGSDQQHHHQGSGSGSGSGSGPGSGGAGGPGGHSGRGGALPDNQAGGEGKHITVFKTYISPWEKAMGIDPQQKVELGIDLLAYGAKAELPKYKSFNRTAMPYGGYEKASKRMTFQMPKFDLGPLLSEPLVLYNQNLSNRPSFNRTPIPWLSSGEPVDYNVDISIPLDGETEEL.

The segment at 1–34 (MPLSGTPAPNKKRKSSKLIMELTGGGQESSGLNL) is disordered. Ser-82 is modified (phosphoserine). The disordered stretch occupies residues 105-172 (FSYSKSSGGG…ALPDNQAGGE (68 aa)). Over residues 118-128 (RSGSAGQYGSD) the composition is skewed to low complexity. The segment covering 136-162 (SGSGSGSGSGPGSGGAGGPGGHSGRGG) has biased composition (gly residues).

This sequence belongs to the myozenin family. Interacts with ACTN2, ACTN3, FLNA, FLNB, FLNC, LDB3, PPP3CA and TCAP. Interacts via its C-terminal region with MYOT.

It is found in the nucleus. It localises to the cell projection. The protein localises to the pseudopodium. Its function is as follows. Myozenins may serve as intracellular binding proteins involved in linking Z-disk proteins such as alpha-actinin, gamma-filamin, TCAP/telethonin, LDB3/ZASP and localizing calcineurin signaling to the sarcomere. Plays an important role in the modulation of calcineurin signaling. May play a role in myofibrillogenesis. This Bos taurus (Bovine) protein is Myozenin-1 (MYOZ1).